Consider the following 753-residue polypeptide: Eukaryotic translation initiation factor 3 subunit B (753 aa).

In terms of domain architecture, RRM spans 42–129 (TMLVVDNIPI…NVLHVNRFGD (88 aa)). 5 WD repeats span residues 142–185 (DLPS…WWNG), 203–241 (NSKW…GPIG), 321–362 (DTQS…LLDR), 537–580 (LDSK…DERR), and 595–640 (GEHY…LLHE). Residues 723–753 (KSKAKIDVKGQEARVEEWVEELIDETEELSM) adopt a coiled-coil conformation.

It belongs to the eIF-3 subunit B family. Component of the eukaryotic translation initiation factor 3 (eIF-3) complex.

It localises to the cytoplasm. RNA-binding component of the eukaryotic translation initiation factor 3 (eIF-3) complex, which is involved in protein synthesis of a specialized repertoire of mRNAs and, together with other initiation factors, stimulates binding of mRNA and methionyl-tRNAi to the 40S ribosome. The eIF-3 complex specifically targets and initiates translation of a subset of mRNAs involved in cell proliferation. The sequence is that of Eukaryotic translation initiation factor 3 subunit B from Cryptococcus neoformans var. neoformans serotype D (strain B-3501A) (Filobasidiella neoformans).